Here is a 761-residue protein sequence, read N- to C-terminus: Pleckstrin homology domain-containing family M member 3 (761 aa).

A Phosphoserine modification is found at S132. PH domains follow at residues 211–308 (NILK…EVVH) and 361–456 (NILK…IAAN). The segment at 669-722 (SHVYSCSLCSQKGFICEICNNGEILYPFEDISTSRCESCGAVFHSECKEKSVPC) adopts a Phorbol-ester/DAG-type zinc-finger fold.

As to quaternary structure, interacts with AKT1.

The protein localises to the cytoplasm. It is found in the golgi apparatus. It localises to the cell membrane. Functionally, involved in skeletal muscle differentiation. May act as a scaffold protein for AKT1 during muscle differentiation. In Homo sapiens (Human), this protein is Pleckstrin homology domain-containing family M member 3.